The chain runs to 55 residues: Large ribosomal subunit protein bL33 (55 aa).

It belongs to the bacterial ribosomal protein bL33 family.

This is Large ribosomal subunit protein bL33 from Vibrio cholerae serotype O1 (strain ATCC 39541 / Classical Ogawa 395 / O395).